The chain runs to 447 residues: Tubulin beta-5 chain (447 aa).

GTP contacts are provided by Gln11, Glu69, Ser138, Gly142, Thr143, Gly144, Asn204, and Asn226. Residue Glu69 coordinates Mg(2+). The disordered stretch occupies residues 421–447; it reads EYQQYQDATADDEEEDYGDEEEDEVAA. The segment covering 429-447 has biased composition (acidic residues); sequence TADDEEEDYGDEEEDEVAA.

This sequence belongs to the tubulin family. As to quaternary structure, dimer of alpha and beta chains. A typical microtubule is a hollow water-filled tube with an outer diameter of 25 nm and an inner diameter of 15 nM. Alpha-beta heterodimers associate head-to-tail to form protofilaments running lengthwise along the microtubule wall with the beta-tubulin subunit facing the microtubule plus end conferring a structural polarity. Microtubules usually have 13 protofilaments but different protofilament numbers can be found in some organisms and specialized cells. Mg(2+) is required as a cofactor. As to expression, expressed in roots, leaf sheaths, and suspension cultured cells.

The protein localises to the cytoplasm. Its subcellular location is the cytoskeleton. In terms of biological role, tubulin is the major constituent of microtubules, a cylinder consisting of laterally associated linear protofilaments composed of alpha- and beta-tubulin heterodimers. Microtubules grow by the addition of GTP-tubulin dimers to the microtubule end, where a stabilizing cap forms. Below the cap, tubulin dimers are in GDP-bound state, owing to GTPase activity of alpha-tubulin. The polypeptide is Tubulin beta-5 chain (TUBB5) (Oryza sativa subsp. japonica (Rice)).